An 82-amino-acid polypeptide reads, in one-letter code: Small ribosomal subunit protein bS16 (82 aa).

It belongs to the bacterial ribosomal protein bS16 family.

This chain is Small ribosomal subunit protein bS16, found in Edwardsiella ictaluri (strain 93-146).